An 86-amino-acid chain; its full sequence is Omega-theraphotoxin-Hhn1f 4 (86 aa).

An N-terminal signal peptide occupies residues 1 to 21 (MKSIVFVALFGLALLAVVCSA). Residues 22 to 50 (SEDAHKELLKEVVRAMVVDKTDAVQAGER) constitute a propeptide that is removed on maturation. 3 cysteine pairs are disulfide-bonded: Cys52–Cys66, Cys59–Cys71, and Cys65–Cys78.

It belongs to the neurotoxin 10 (Hwtx-1) family. 17 (Hntx-9) subfamily. As to expression, expressed by the venom gland.

The protein resides in the secreted. In terms of biological role, ion channel inhibitor. This Cyriopagopus hainanus (Chinese bird spider) protein is Omega-theraphotoxin-Hhn1f 4.